The primary structure comprises 200 residues: Recombination protein RecR (200 aa).

A C4-type zinc finger spans residues 57 to 72; sequence CDSCQNFSDTEICQIC. The Toprim domain maps to 80-175; that stretch reads GTLCVVESPS…LITRLAHGIP (96 aa).

Belongs to the RecR family.

Functionally, may play a role in DNA repair. It seems to be involved in an RecBC-independent recombinational process of DNA repair. It may act with RecF and RecO. This is Recombination protein RecR from Marinobacter nauticus (strain ATCC 700491 / DSM 11845 / VT8) (Marinobacter aquaeolei).